Consider the following 318-residue polypeptide: Ribose-phosphate pyrophosphokinase (318 aa).

ATP-binding positions include 43 to 45 (DGE) and 102 to 103 (RQ). Positions 136 and 176 each coordinate Mg(2+). Lys199 is an active-site residue. D-ribose 5-phosphate-binding positions include Arg201, Asp225, and 229-233 (DTAGT).

The protein belongs to the ribose-phosphate pyrophosphokinase family. Class I subfamily. As to quaternary structure, homohexamer. It depends on Mg(2+) as a cofactor.

It is found in the cytoplasm. It carries out the reaction D-ribose 5-phosphate + ATP = 5-phospho-alpha-D-ribose 1-diphosphate + AMP + H(+). It participates in metabolic intermediate biosynthesis; 5-phospho-alpha-D-ribose 1-diphosphate biosynthesis; 5-phospho-alpha-D-ribose 1-diphosphate from D-ribose 5-phosphate (route I): step 1/1. Its function is as follows. Involved in the biosynthesis of the central metabolite phospho-alpha-D-ribosyl-1-pyrophosphate (PRPP) via the transfer of pyrophosphoryl group from ATP to 1-hydroxyl of ribose-5-phosphate (Rib-5-P). This Listeria ivanovii protein is Ribose-phosphate pyrophosphokinase.